Consider the following 71-residue polypeptide: MANDGSLSDRIDALEMRLSYQDETIETLNQTVTAQWKQIDTLTRQIAALSERLQQAESSVATPANERPPHY.

The protein belongs to the SlyX family.

The chain is Protein SlyX homolog from Rhodopseudomonas palustris (strain BisB5).